A 392-amino-acid chain; its full sequence is Histidinol-phosphate aminotransferase 2 (392 aa).

The residue at position 228 (Lys-228) is an N6-(pyridoxal phosphate)lysine.

This sequence belongs to the class-II pyridoxal-phosphate-dependent aminotransferase family. Histidinol-phosphate aminotransferase subfamily. Homodimer. The cofactor is pyridoxal 5'-phosphate.

The catalysed reaction is L-histidinol phosphate + 2-oxoglutarate = 3-(imidazol-4-yl)-2-oxopropyl phosphate + L-glutamate. Its pathway is amino-acid biosynthesis; L-histidine biosynthesis; L-histidine from 5-phospho-alpha-D-ribose 1-diphosphate: step 7/9. The sequence is that of Histidinol-phosphate aminotransferase 2 from Nitrosospira multiformis (strain ATCC 25196 / NCIMB 11849 / C 71).